A 361-amino-acid chain; its full sequence is Transposase A from transposon Tn554 (361 aa).

In terms of domain architecture, Core-binding (CB) spans Y23–S120. A Tyr recombinase domain is found at K163 to N351. Residues R198, K232, H302, R305, and H328 contribute to the active site. The O-(3'-phospho-DNA)-tyrosine intermediate role is filled by Y338.

Belongs to the 'phage' integrase family.

One of three proteins encoded by transposon Tn554 required for its transposition. This Staphylococcus aureus (strain Mu50 / ATCC 700699) protein is Transposase A from transposon Tn554 (tnpA1).